The following is a 218-amino-acid chain: MAPIRRSSRLAERYDAIESKKRSLKRLEEQIKAEEEQFSDKMKQLEDEIKIKEQVITMFKRKTVRREWMRNSRQATTNINIAQIESLKLQLEEGEKDIAEAEKQAEPTTPQQEAELSETFKQMVRDRMKVKDVDEKLLQQYMKKENVEFEWRSCFICTMEYSRTDKNLHPIILNCGHNLCRSCINKLTGNGIVKCPFDRLDTRVRVTGLPRNLALINL.

The RING-type zinc finger occupies 154 to 199; sequence CFICTMEYSRTDKNLHPIILNCGHNLCRSCINKLTGNGIVKCPFDR.

This is an uncharacterized protein from Caenorhabditis elegans.